The chain runs to 312 residues: Polyamine aminopropyltransferase (312 aa).

Residues F7–Q247 form the PABS domain. An S-methyl-5'-thioadenosine-binding site is contributed by Q36. Spermidine-binding residues include H67 and E95. S-methyl-5'-thioadenosine contacts are provided by residues D115 and D147–A148. D165 functions as the Proton acceptor in the catalytic mechanism. Residue P174 coordinates S-methyl-5'-thioadenosine.

This sequence belongs to the spermidine/spermine synthase family. Homodimer or homotetramer.

It is found in the cytoplasm. It catalyses the reaction S-adenosyl 3-(methylsulfanyl)propylamine + putrescine = S-methyl-5'-thioadenosine + spermidine + H(+). It functions in the pathway amine and polyamine biosynthesis; spermidine biosynthesis; spermidine from putrescine: step 1/1. Its function is as follows. Catalyzes the irreversible transfer of a propylamine group from the amino donor S-adenosylmethioninamine (decarboxy-AdoMet) to putrescine (1,4-diaminobutane) to yield spermidine. The protein is Polyamine aminopropyltransferase of Synechococcus sp. (strain JA-2-3B'a(2-13)) (Cyanobacteria bacterium Yellowstone B-Prime).